We begin with the raw amino-acid sequence, 316 residues long: Ribosomal RNA small subunit methyltransferase H (316 aa).

Residues 35 to 37 (SGH), aspartate 55, phenylalanine 84, aspartate 105, and glutamine 112 contribute to the S-adenosyl-L-methionine site.

The protein belongs to the methyltransferase superfamily. RsmH family.

It localises to the cytoplasm. The enzyme catalyses cytidine(1402) in 16S rRNA + S-adenosyl-L-methionine = N(4)-methylcytidine(1402) in 16S rRNA + S-adenosyl-L-homocysteine + H(+). Specifically methylates the N4 position of cytidine in position 1402 (C1402) of 16S rRNA. This chain is Ribosomal RNA small subunit methyltransferase H, found in Streptococcus equi subsp. zooepidemicus (strain H70).